The chain runs to 459 residues: Argininosuccinate lyase (459 aa).

The protein belongs to the lyase 1 family. Argininosuccinate lyase subfamily.

Its subcellular location is the cytoplasm. It carries out the reaction 2-(N(omega)-L-arginino)succinate = fumarate + L-arginine. It functions in the pathway amino-acid biosynthesis; L-arginine biosynthesis; L-arginine from L-ornithine and carbamoyl phosphate: step 3/3. The polypeptide is Argininosuccinate lyase (Prochlorococcus marinus (strain MIT 9515)).